The sequence spans 31 residues: Monocyclic monoterpene ketone monooxygenase (31 aa).

An FAD-binding site is contributed by 20-25 (GAGFXG).

Monomer. The cofactor is FAD.

The catalysed reaction is 1-hydroxylimonen-2-one + NADPH + O2 = 3-isopropenyl-6-oxoheptanoate + NADP(+) + H2O. The enzyme catalyses (1R,4S)-1-hydroxylimonen-2-one + NADPH + O2 + H(+) = (4S,7S)-7-hydroxy-4-isopropenyl-7-methyloxepan-2-one + NADP(+) + H2O. It carries out the reaction (1S,4R)-1-hydroxylimonen-2-one + NADPH + O2 + H(+) = (4R,7R)-7-hydroxy-4-isopropenyl-7-methyloxepan-2-one + NADP(+) + H2O. It catalyses the reaction (1R,4R)-dihydrocarvone + NADPH + O2 + H(+) = (4R,7R)-4-isopropenyl-7-methyloxepan-2-one + NADP(+) + H2O. The catalysed reaction is (1S,4R)-menthone + NADPH + O2 + H(+) = (4S,7R)-7-isopropyl-4-methyloxepan-2-one + NADP(+) + H2O. The enzyme catalyses (1R,4S)-menthone + NADPH + O2 + H(+) = (4R,7S)-7-isopropyl-4-methyloxepan-2-one + NADP(+) + H2O. It carries out the reaction (1S,4R)-isodihydrocarvone + NADPH + O2 + H(+) = (3S,6R)-6-isopropenyl-3-methyloxepan-2-one + NADP(+) + H2O. It participates in terpene metabolism; monoterpene degradation. Its function is as follows. Catalyzes the NADPH- and oxygen-dependent oxidation of the monocyclic monoterpene ketones 1-hydroxy-2-oxolimonene, dihydrocarvone and menthone. Is able to convert all enantiomers of these natural substrates with almost equal efficiency. Is thus involved in the conversion of the monocyclic monoterpene ketone intermediates formed in the degradation pathways of all stereoisomers of three different monocyclic monoterpenes, i.e. limonene, (dihydro)carveol and menthol, which likely make R.erythropolis able to grow on these compounds as the sole source of carbon and energy. The protein is Monocyclic monoterpene ketone monooxygenase of Rhodococcus erythropolis (Arthrobacter picolinophilus).